The sequence spans 136 residues: Protein PsiE (136 aa).

The next 4 helical transmembrane spans lie at 15-35, 55-75, 82-102, and 108-128; these read ILQTVLNLGLLCLGLILVVFL, YELVEGLVVYFLYFEFIALIV, FHFPLRYFVYIGITAIVRLII, and PLDVLIYSAAILLLVITLWLC.

This sequence belongs to the PsiE family.

It localises to the cell inner membrane. The polypeptide is Protein PsiE (Escherichia coli (strain SE11)).